The sequence spans 631 residues: MKFMKLGSRPDTFYTSEDLRCVSSEVSSDFTIEVSGSRYLLHKFPLLSKCLRLQRMCSESPESIIQLPEFPGGVEAFELCAKFCYGITITISAYNIVAARCAAEYLQMSEEVEKGNLVYKLEVFFNSCILNGWRDSIVTLQTTKAFPLWSEDLAITSRCIEAIASKVLSHPSKVSLSHSHSRRVRDDDMSSNRAAASSRGWWAEDIAELGIDLYWRTMIAIKSGGKVPASLIGDALRVYASKWLPTLQRNRKVVKKKEDSDSDSDTDTSSKHRLLLESIISLLPAEKGAVSCSFLLKLLKAANILNASTSSKMELARRVALQLEEATVSDLLIPPMSYKSELLYDVDIVATILEQFMVQGQTSPPTSPLRGKKGMMDRRRRSRSAENIDLEFQESRRSSSASHSSKLKVAKLVDGYLQQIARDVNLPLSKFVTLAESVPEFSRLDHDDLYRAIDIYLKAHKNLNKSERKRVCRVLDCKKLSMEACMHAAQNEMLPLRVVVQVLFYEQARAAAATNNGEKNTTELPSNIKALLAAHNIDPSNPNAAAFSTTTSIAAPEDRWSVSGLKSPKSKLSGTLRSKLAEDEEVDERFMNGDGGRTPSRFKAFCAIPGRPKKMFSKLLSINRNSSDKNC.

Residues 28–93 (SDFTIEVSGS…CYGITITISA (66 aa)) enclose the BTB domain. Residues 200-509 (GWWAEDIAEL…VQVLFYEQAR (310 aa)) form the NPH3 domain. Residues 361–399 (QTSPPTSPLRGKKGMMDRRRRSRSAENIDLEFQESRRSS) form a disordered region. Residues 370–382 (RGKKGMMDRRRRS) are compositionally biased toward basic residues. A Phosphotyrosine modification is found at tyrosine 450. A Phosphoserine modification is found at serine 567.

The protein belongs to the NPH3 family.

The protein operates within protein modification; protein ubiquitination. Its function is as follows. May act as a substrate-specific adapter of an E3 ubiquitin-protein ligase complex (CUL3-RBX1-BTB) which mediates the ubiquitination and subsequent proteasomal degradation of target proteins. The protein is BTB/POZ domain-containing protein At1g67900 of Arabidopsis thaliana (Mouse-ear cress).